The sequence spans 292 residues: Acetyl-coenzyme A carboxylase carboxyl transferase subunit beta (292 aa).

A CoA carboxyltransferase N-terminal domain is found at Leu29–Asn292. Zn(2+) is bound by residues Cys33, Cys36, Cys52, and Cys55. The C4-type zinc-finger motif lies at Cys33–Cys55.

This sequence belongs to the AccD/PCCB family. As to quaternary structure, acetyl-CoA carboxylase is a heterohexamer composed of biotin carboxyl carrier protein (AccB), biotin carboxylase (AccC) and two subunits each of ACCase subunit alpha (AccA) and ACCase subunit beta (AccD). Requires Zn(2+) as cofactor.

The protein localises to the cytoplasm. The catalysed reaction is N(6)-carboxybiotinyl-L-lysyl-[protein] + acetyl-CoA = N(6)-biotinyl-L-lysyl-[protein] + malonyl-CoA. It participates in lipid metabolism; malonyl-CoA biosynthesis; malonyl-CoA from acetyl-CoA: step 1/1. Its function is as follows. Component of the acetyl coenzyme A carboxylase (ACC) complex. Biotin carboxylase (BC) catalyzes the carboxylation of biotin on its carrier protein (BCCP) and then the CO(2) group is transferred by the transcarboxylase to acetyl-CoA to form malonyl-CoA. The protein is Acetyl-coenzyme A carboxylase carboxyl transferase subunit beta of Prochlorococcus marinus (strain MIT 9515).